Consider the following 1168-residue polypeptide: Probable pre-mRNA-splicing factor ATP-dependent RNA helicase DEAH5 (1168 aa).

The disordered stretch occupies residues 76–206 (IYPPKPKSEK…KDEYVEEDKG (131 aa)). Basic and acidic residues-rich tracts occupy residues 81–172 (PKSE…DRRS) and 180–206 (GRGD…EDKG). Residues 214–283 (YQVYKGRVTR…SSDKYSLSMR (70 aa)) enclose the S1 motif domain. The segment at 289 to 326 (TGRDLIPLRKPSDEDDSSRSNPSYRTKDGQVTKTGISG) is disordered. Ser-411 is modified (phosphoserine). The Helicase ATP-binding domain occupies 525 to 688 (IQAVHDNQVL…FFNCNIFTIP (164 aa)). ATP is bound at residue 538–545 (GETGSGKT). Residues 635–638 (DEAH) carry the DEAH box motif. A Helicase C-terminal domain is found at 706–886 (YLDAALITVL…MTTLTMKAMG (181 aa)).

It belongs to the DEAD box helicase family. DEAH subfamily. PRP22 sub-subfamily.

It is found in the nucleus. The enzyme catalyses ATP + H2O = ADP + phosphate + H(+). Its function is as follows. May be involved in pre-mRNA splicing. The polypeptide is Probable pre-mRNA-splicing factor ATP-dependent RNA helicase DEAH5 (Arabidopsis thaliana (Mouse-ear cress)).